A 195-amino-acid chain; its full sequence is Peptidyl-tRNA hydrolase (195 aa).

Y18 serves as a coordination point for tRNA. H23 acts as the Proton acceptor in catalysis. 3 residues coordinate tRNA: Y69, N71, and N117.

This sequence belongs to the PTH family. As to quaternary structure, monomer.

Its subcellular location is the cytoplasm. It catalyses the reaction an N-acyl-L-alpha-aminoacyl-tRNA + H2O = an N-acyl-L-amino acid + a tRNA + H(+). Its function is as follows. Hydrolyzes ribosome-free peptidyl-tRNAs (with 1 or more amino acids incorporated), which drop off the ribosome during protein synthesis, or as a result of ribosome stalling. Functionally, catalyzes the release of premature peptidyl moieties from peptidyl-tRNA molecules trapped in stalled 50S ribosomal subunits, and thus maintains levels of free tRNAs and 50S ribosomes. In Nitrosomonas europaea (strain ATCC 19718 / CIP 103999 / KCTC 2705 / NBRC 14298), this protein is Peptidyl-tRNA hydrolase.